The chain runs to 186 residues: C-type lectin 37Da (186 aa).

A signal peptide spans M1 to G20. N-linked (GlcNAc...) asparagine glycosylation is found at N35 and N47. Residues I46–K169 form the C-type lectin domain. A disulfide bridge links C140 with C160.

Its subcellular location is the secreted. Galactose-specific lectin that displays calcium-dependent activity. Binds to the surface of hemocytes and enhances hemocyte encapsulation and melanization. This is likely by interacting with carbohydrates on the surface of the hemocytes. Also displays agglutination activity against the Gram-negative bacterium E.coli. The protein is C-type lectin 37Da of Drosophila melanogaster (Fruit fly).